The following is a 167-amino-acid chain: CGG triplet repeat-binding protein 1 (167 aa).

Ser-56 carries the post-translational modification Phosphoserine. The tract at residues 65–86 is disordered; sequence KTHTKRKAEFEEQNVRKKQRPL. Positions 80 to 84 match the Nuclear localization signal motif; it reads RKKQR. Ser-164 carries the post-translational modification Phosphoserine.

The protein localises to the nucleus. Functionally, binds to nonmethylated 5'-d(CGG)(n)-3' trinucleotide repeats in the FMR1 promoter. May play a role in regulating FMR1 promoter. This chain is CGG triplet repeat-binding protein 1 (Cggbp1), found in Mus musculus (Mouse).